A 740-amino-acid chain; its full sequence is NAD(P)H-quinone oxidoreductase subunit 5, chloroplastic (740 aa).

Helical transmembrane passes span 9-29 (WIIP…LLLI), 39-59 (IWAF…TKLA), 89-109 (IDPL…MVLI), 125-145 (FAYM…PNLI), 147-167 (IHIF…FWFT), 185-205 (GDFG…SFEF), 231-251 (AFLL…HVWL), 259-279 (TPIS…FLVA), 281-301 (LLPL…IGLI), 328-348 (LGYI…FHLI), 355-375 (ALLF…VGYS), 397-417 (TTFF…CFWS), 426-446 (WLYS…TAFY), 548-568 (TMLF…CIGI), 607-627 (FYSV…YGSV), and 719-739 (GRIS…LLLV).

Belongs to the complex I subunit 5 family. NDH is composed of at least 16 different subunits, 5 of which are encoded in the nucleus.

Its subcellular location is the plastid. It is found in the chloroplast thylakoid membrane. It catalyses the reaction a plastoquinone + NADH + (n+1) H(+)(in) = a plastoquinol + NAD(+) + n H(+)(out). The catalysed reaction is a plastoquinone + NADPH + (n+1) H(+)(in) = a plastoquinol + NADP(+) + n H(+)(out). In terms of biological role, NDH shuttles electrons from NAD(P)H:plastoquinone, via FMN and iron-sulfur (Fe-S) centers, to quinones in the photosynthetic chain and possibly in a chloroplast respiratory chain. The immediate electron acceptor for the enzyme in this species is believed to be plastoquinone. Couples the redox reaction to proton translocation, and thus conserves the redox energy in a proton gradient. This is NAD(P)H-quinone oxidoreductase subunit 5, chloroplastic (ndhF) from Nuphar advena (Common spatterdock).